The sequence spans 368 residues: Ceramide synthase hyl-1 (368 aa).

7 helical membrane-spanning segments follow: residues 27 to 47 (FVDL…RILW), 92 to 112 (ILEC…GLYV), 138 to 158 (IWWY…GSTF), 165 to 185 (FWQL…SWTI), 191 to 211 (GTLI…GKLV), 225 to 245 (FVLF…FIVI), and 275 to 295 (LIVF…FIIL). One can recognise a TLC domain in the interval 90-303 (KKILECFWRF…ILRIAYRTST (214 aa)). Residues 306-368 (QAKDVRSDSD…ARHRRAPRKE (63 aa)) form a disordered region. Residues 343 to 353 (TDDDDDEGEEE) are compositionally biased toward acidic residues. A compositionally biased stretch (basic residues) spans 357-368 (RKARHRRAPRKE).

Belongs to the sphingosine N-acyltransferase family.

The protein resides in the membrane. It catalyses the reaction a very long-chain fatty acyl-CoA + a sphingoid base = an N-(very-long-chain fatty acyl)-sphingoid base + CoA + H(+). The enzyme catalyses 15-methylhexadecasphinganine + a fatty acyl-CoA = an N-acyl-15-methylhexadecasphinganine + CoA + H(+). It carries out the reaction a fatty acyl-CoA + sphinganine = an N-acylsphinganine + CoA + H(+). The catalysed reaction is sphinganine + tetradecanoyl-CoA = N-(tetradecanoyl)-sphinganine + CoA + H(+). It catalyses the reaction hexacosanoyl-CoA + sphinganine = N-hexacosanoylsphinganine + CoA + H(+). It participates in lipid metabolism; sphingolipid metabolism. Catalyzes the acylation of sphingoid bases to form ceramides, which are key players in cell signaling events such as extending lifespan and enhancing stress resistance. C.elegans contain specific sphingoid bases, which are unique or different in structure compared to the sphingoid bases found in other animals. Two examples of these distinctive compounds are: 15-methylhexadecasphinganine and 15-methylhexadecasphing-4-enine. Exhibits substrate preference for fatty acyl-coA chains containing carbon chain length (C16-C18) and very long chains (24 carbons and more). This chain is Ceramide synthase hyl-1 (hyl-1), found in Caenorhabditis elegans.